The chain runs to 361 residues: Phospho-N-acetylmuramoyl-pentapeptide-transferase (361 aa).

Helical transmembrane passes span P10–I30, L40–P60, G84–V104, G107–I127, L147–I167, W175–A195, L206–M226, G232–L252, V260–L280, L288–F308, and V341–P361.

Belongs to the glycosyltransferase 4 family. MraY subfamily. Mg(2+) serves as cofactor.

It is found in the cell inner membrane. The enzyme catalyses UDP-N-acetyl-alpha-D-muramoyl-L-alanyl-gamma-D-glutamyl-meso-2,6-diaminopimeloyl-D-alanyl-D-alanine + di-trans,octa-cis-undecaprenyl phosphate = di-trans,octa-cis-undecaprenyl diphospho-N-acetyl-alpha-D-muramoyl-L-alanyl-D-glutamyl-meso-2,6-diaminopimeloyl-D-alanyl-D-alanine + UMP. It functions in the pathway cell wall biogenesis; peptidoglycan biosynthesis. Functionally, catalyzes the initial step of the lipid cycle reactions in the biosynthesis of the cell wall peptidoglycan: transfers peptidoglycan precursor phospho-MurNAc-pentapeptide from UDP-MurNAc-pentapeptide onto the lipid carrier undecaprenyl phosphate, yielding undecaprenyl-pyrophosphoryl-MurNAc-pentapeptide, known as lipid I. The protein is Phospho-N-acetylmuramoyl-pentapeptide-transferase of Synechococcus sp. (strain RCC307).